The following is a 431-amino-acid chain: Tol-Pal system protein TolB (431 aa).

An N-terminal signal peptide occupies residues 1-26; that stretch reads MSLMTKLGFRALVASCLIAAGSAANA. A disordered region spans residues 411–431; that stretch reads PQILSVQGGSVREPSWGPFMQ.

The protein belongs to the TolB family. The Tol-Pal system is composed of five core proteins: the inner membrane proteins TolA, TolQ and TolR, the periplasmic protein TolB and the outer membrane protein Pal. They form a network linking the inner and outer membranes and the peptidoglycan layer.

It localises to the periplasm. Functionally, part of the Tol-Pal system, which plays a role in outer membrane invagination during cell division and is important for maintaining outer membrane integrity. This Burkholderia multivorans (strain ATCC 17616 / 249) protein is Tol-Pal system protein TolB.